A 393-amino-acid polypeptide reads, in one-letter code: Pectate lyase A (393 aa).

Positions 1–32 are cleaved as a signal peptide; sequence MMNKASGRSFTRSSKYLLATLIAGMMASGVSA. Residues E174, D176, D216, and D220 each coordinate Ca(2+). R273 is a catalytic residue. An intrachain disulfide couples C330 to C358.

This sequence belongs to the polysaccharide lyase 1 family. PLADES subfamily. Ca(2+) is required as a cofactor.

It localises to the secreted. The enzyme catalyses Eliminative cleavage of (1-&gt;4)-alpha-D-galacturonan to give oligosaccharides with 4-deoxy-alpha-D-galact-4-enuronosyl groups at their non-reducing ends.. It participates in glycan metabolism; pectin degradation; 2-dehydro-3-deoxy-D-gluconate from pectin: step 2/5. Involved in maceration and soft-rotting of plant tissue. The protein is Pectate lyase A (pelA) of Dickeya chrysanthemi (Pectobacterium chrysanthemi).